Here is a 179-residue protein sequence, read N- to C-terminus: Alpha-tubulin N-acetyltransferase (179 aa).

One can recognise an N-acetyltransferase domain in the interval 1–175 (MRVEVVRAPG…NRFVVFDAYF (175 aa)). Residues 109-122 (FYVD…GVGL) and 145-154 (SPKLFAFLKK) contribute to the acetyl-CoA site.

The protein belongs to the acetyltransferase ATAT1 family.

It catalyses the reaction L-lysyl-[alpha-tubulin] + acetyl-CoA = N(6)-acetyl-L-lysyl-[alpha-tubulin] + CoA + H(+). Its function is as follows. Specifically acetylates 'Lys-40' in alpha-tubulin on the lumenal side of microtubules. Promotes microtubule destabilization and accelerates microtubule dynamics; this activity may be independent of acetylation activity. Acetylates alpha-tubulin with a slow enzymatic rate, due to a catalytic site that is not optimized for acetyl transfer. Enters the microtubule through each end and diffuses quickly throughout the lumen of microtubules. Acetylates only long/old microtubules because of its slow acetylation rate since it does not have time to act on dynamically unstable microtubules before the enzyme is released. The protein is Alpha-tubulin N-acetyltransferase of Phytophthora infestans (strain T30-4) (Potato late blight agent).